The sequence spans 492 residues: NADPH:adrenodoxin oxidoreductase, mitochondrial (492 aa).

Residues 1–32 (MAPRCWRWWPWSSWTRTRLPPSRSIQNFGQHF) constitute a mitochondrion transit peptide. 4 residues coordinate FAD: Ala-49, Glu-70, Leu-78, and Val-114. Residues 185-188 (QGNV), 229-230 (RR), and Glu-241 each bind NADP(+). 2 positions are modified to phosphoserine: Ser-311 and Ser-318. FAD is bound by residues Trp-399 and 406-408 (GVI). Residue Gly-406 participates in NADP(+) binding.

Belongs to the ferredoxin--NADP reductase type 1 family. In terms of assembly, monomer. Interacts directly with FDX1. Requires FAD as cofactor. As to expression, detected in adrenal cortex and corpus luteum (at protein level).

It localises to the mitochondrion inner membrane. The catalysed reaction is 2 reduced [adrenodoxin] + NADP(+) + H(+) = 2 oxidized [adrenodoxin] + NADPH. It catalyses the reaction 2 reduced [2Fe-2S]-[ferredoxin] + NADP(+) + H(+) = 2 oxidized [2Fe-2S]-[ferredoxin] + NADPH. The protein operates within steroid metabolism; cholesterol metabolism. Functionally, serves as the first electron transfer protein in all the mitochondrial P450 systems including cholesterol side chain cleavage in all steroidogenic tissues, steroid 11-beta hydroxylation in the adrenal cortex, 25-OH-vitamin D3-24 hydroxylation in the kidney, and sterol C-27 hydroxylation in the liver. Also acts as a ferredoxin--NADP(+) reductase essential for coenzyme Q biosynthesis: together with FDX2, transfers the electrons required for the hydroxylation reaction performed by COQ6. The chain is NADPH:adrenodoxin oxidoreductase, mitochondrial (FDXR) from Bos taurus (Bovine).